The following is a 50-amino-acid chain: Large ribosomal subunit protein bL33 (50 aa).

It belongs to the bacterial ribosomal protein bL33 family.

In Hydrogenovibrio crunogenus (strain DSM 25203 / XCL-2) (Thiomicrospira crunogena), this protein is Large ribosomal subunit protein bL33.